The sequence spans 373 residues: Opsin Rh1 (373 aa).

Over 1–49 the chain is Extracellular; sequence MESFAVAAAQLGPHFAPLSNGSVVDKVTPDMAHLISPYWNQFPAMDPIW. N-linked (GlcNAc...) asparagine glycosylation is present at Asn20. Residues 50 to 74 form a helical membrane-spanning segment; the sequence is AKILTAYMIMIGMISWCGNGVVIYI. The Cytoplasmic portion of the chain corresponds to 75–86; the sequence is FATTKSLRTPAN. The helical transmembrane segment at 87–112 threads the bilayer; it reads LLVINLAISDFGIMITNTPMMGINLY. At 113–126 the chain is on the extracellular side; it reads FETWVLGPMMCDIY. Cys123 and Cys200 form a disulfide bridge. A helical transmembrane segment spans residues 127 to 146; sequence AGLGSAFGCSSIWSMCMISL. Over 147 to 165 the chain is Cytoplasmic; it reads DRYQVIVKGMAGRPMTIPL. The helical transmembrane segment at 166 to 189 threads the bilayer; the sequence is ALGKIAYIWFMSSIWCLAPAFGWS. Residues 190–213 lie on the Extracellular side of the membrane; the sequence is RYVPEGNLTSCGIDYLERDWNPRS. N-linked (GlcNAc...) asparagine glycosylation occurs at Asn196. A helical transmembrane segment spans residues 214–241; it reads YLIFYSIFVYYIPLFLICYSYWFIIAAV. Residues 242–276 lie on the Cytoplasmic side of the membrane; sequence SAHEKAMREQAKKMNVKSLRSSEDAEKSAEGKLAK. The helical transmembrane segment at 277–300 threads the bilayer; that stretch reads VALVTITLWFMAWTPYLVINCMGL. Residues 301–307 are Extracellular-facing; it reads FKFEGLT. Residues 308 to 332 form a helical membrane-spanning segment; that stretch reads PLNTIWGACFAKSAACYNPIVYGIS. The residue at position 319 (Lys319) is an N6-(retinylidene)lysine. The Cytoplasmic portion of the chain corresponds to 333–373; the sequence is HPKYRLALKEKCPCCVFGKVDDGKSSDAQSQATASEAESKA. Residues 354-373 are disordered; that stretch reads DGKSSDAQSQATASEAESKA. A compositionally biased stretch (low complexity) spans 358-373; that stretch reads SDAQSQATASEAESKA.

This sequence belongs to the G-protein coupled receptor 1 family. Opsin subfamily. Post-translationally, phosphorylated on some or all of the serine and threonine residues present in the C-terminal region.

The protein localises to the cell projection. The protein resides in the rhabdomere membrane. In terms of biological role, visual pigments are the light-absorbing molecules that mediate vision. They consist of an apoprotein, opsin, covalently linked to cis-retinal. This Drosophila melanogaster (Fruit fly) protein is Opsin Rh1 (ninaE).